We begin with the raw amino-acid sequence, 189 residues long: Hypoxanthine/guanine phosphoribosyltransferase (189 aa).

The protein belongs to the purine/pyrimidine phosphoribosyltransferase family. Archaeal HPRT subfamily. Homodimer.

The protein resides in the cytoplasm. It catalyses the reaction IMP + diphosphate = hypoxanthine + 5-phospho-alpha-D-ribose 1-diphosphate. It carries out the reaction GMP + diphosphate = guanine + 5-phospho-alpha-D-ribose 1-diphosphate. The protein operates within purine metabolism; IMP biosynthesis via salvage pathway; IMP from hypoxanthine: step 1/1. Catalyzes a salvage reaction resulting in the formation of IMP that is energically less costly than de novo synthesis. This is Hypoxanthine/guanine phosphoribosyltransferase from Methanosarcina mazei (strain ATCC BAA-159 / DSM 3647 / Goe1 / Go1 / JCM 11833 / OCM 88) (Methanosarcina frisia).